The chain runs to 85 residues: U4-theraphotoxin-Hhn1i (85 aa).

Positions 1-22 (MKVTLIAILTCAAVLVLHTTAA) are cleaved as a signal peptide. A propeptide spanning residues 23-48 (EELEAESQLMEVGMPDTELAAVDEER) is cleaved from the precursor. 3 disulfides stabilise this stretch: Cys52-Cys66, Cys56-Cys77, and Cys71-Cys82.

This sequence belongs to the neurotoxin 12 (Hwtx-2) family. 02 (Hwtx-2) subfamily. Expressed by the venom gland.

It is found in the secreted. Functionally, postsynaptic neurotoxin. The protein is U4-theraphotoxin-Hhn1i of Cyriopagopus hainanus (Chinese bird spider).